A 193-amino-acid chain; its full sequence is Phosphoheptose isomerase (193 aa).

The region spanning 37-193 (LAASFKADGK…QLIEKEMASV (157 aa)) is the SIS domain. Residue 52–54 (NGG) participates in substrate binding. Residues histidine 61 and glutamate 65 each contribute to the Zn(2+) site. Substrate-binding positions include glutamate 65, 93-94 (ND), 119-121 (STS), serine 124, and glutamine 172. Zn(2+) is bound by residues glutamine 172 and histidine 180.

It belongs to the SIS family. GmhA subfamily. Homotetramer. Requires Zn(2+) as cofactor.

Its subcellular location is the cytoplasm. The enzyme catalyses 2 D-sedoheptulose 7-phosphate = D-glycero-alpha-D-manno-heptose 7-phosphate + D-glycero-beta-D-manno-heptose 7-phosphate. It participates in carbohydrate biosynthesis; D-glycero-D-manno-heptose 7-phosphate biosynthesis; D-glycero-alpha-D-manno-heptose 7-phosphate and D-glycero-beta-D-manno-heptose 7-phosphate from sedoheptulose 7-phosphate: step 1/1. Its function is as follows. Catalyzes the isomerization of sedoheptulose 7-phosphate in D-glycero-D-manno-heptose 7-phosphate. The sequence is that of Phosphoheptose isomerase from Edwardsiella ictaluri (strain 93-146).